The following is a 381-amino-acid chain: Cobalt-precorrin-5B C(1)-methyltransferase (381 aa).

This sequence belongs to the CbiD family.

It carries out the reaction Co-precorrin-5B + S-adenosyl-L-methionine = Co-precorrin-6A + S-adenosyl-L-homocysteine. Its pathway is cofactor biosynthesis; adenosylcobalamin biosynthesis; cob(II)yrinate a,c-diamide from sirohydrochlorin (anaerobic route): step 6/10. Catalyzes the methylation of C-1 in cobalt-precorrin-5B to form cobalt-precorrin-6A. The polypeptide is Cobalt-precorrin-5B C(1)-methyltransferase (Clostridium botulinum (strain Alaska E43 / Type E3)).